Here is a 196-residue protein sequence, read N- to C-terminus: ATP-dependent Clp protease proteolytic subunit 1 (196 aa).

Residue S96 is the Nucleophile of the active site. H121 is an active-site residue.

This sequence belongs to the peptidase S14 family. In terms of assembly, fourteen ClpP subunits assemble into 2 heptameric rings which stack back to back to give a disk-like structure with a central cavity, resembling the structure of eukaryotic proteasomes.

The protein localises to the cytoplasm. It carries out the reaction Hydrolysis of proteins to small peptides in the presence of ATP and magnesium. alpha-casein is the usual test substrate. In the absence of ATP, only oligopeptides shorter than five residues are hydrolyzed (such as succinyl-Leu-Tyr-|-NHMec, and Leu-Tyr-Leu-|-Tyr-Trp, in which cleavage of the -Tyr-|-Leu- and -Tyr-|-Trp bonds also occurs).. Functionally, cleaves peptides in various proteins in a process that requires ATP hydrolysis. Has a chymotrypsin-like activity. Plays a major role in the degradation of misfolded proteins. This chain is ATP-dependent Clp protease proteolytic subunit 1, found in Prochlorococcus marinus (strain SARG / CCMP1375 / SS120).